Here is a 408-residue protein sequence, read N- to C-terminus: Homogentisate geranylgeranyltransferase (408 aa).

Residues 1–68 constitute a chloroplast transit peptide; sequence MQATTAAAAA…SAISQATSPR (68 aa). 9 helical membrane-spanning segments follow: residues 122 to 142, 149 to 169, 194 to 214, 217 to 237, 248 to 268, 286 to 306, 329 to 349, 352 to 372, and 386 to 406; these read HTIFGTIIGITSVSLLPMKSI, VLKGYLEALAAALCMNIYVVG, SVATGVFLVVTFLIMSFSIGI, GSVPLMYALVVSFLLGSAYSI, ALLAASCILFVRAILVQLAFF, LVFATLFMCCFSAVIALFKDI, VYQLCISILLTAYLAATVVGA, THLLQKIITVSGHGLLALTLW, and VTSFYMFIWKLFYAEYFLIPF.

Belongs to the UbiA prenyltransferase family.

Its subcellular location is the plastid. It is found in the chloroplast membrane. The enzyme catalyses homogentisate + (2E,6E,10E)-geranylgeranyl diphosphate + H(+) = 6-geranylgeranyl-2-methylbenzene-1,4-diol + CO2 + diphosphate. It participates in cofactor biosynthesis; tocopherol biosynthesis. In terms of biological role, involved in the synthesis of tocotrienol (vitamin E). Catalyzes the condensation of homogentisate and geranylgeranyl diphosphate to form 2-methyl-6-geranylgeranylbenzoquinol. Possesses low activity with phytyl diphosphate as substrate. The sequence is that of Homogentisate geranylgeranyltransferase from Triticum aestivum (Wheat).